Reading from the N-terminus, the 229-residue chain is uncharacterized protein (229 aa).

The next 7 membrane-spanning stretches (helical) occupy residues 21–41, 56–76, 83–103, 109–129, 141–161, 162–182, and 202–222; these read IYSL…LMLY, MIYY…SSAA, ALPI…FIIV, TVFQ…IIGV, AMFA…FIGS, GMMS…LIAS, and WAVA…ISLL.

Belongs to the BI1 family.

Its subcellular location is the cell membrane. This is an uncharacterized protein from Streptococcus pyogenes serotype M1.